The chain runs to 185 residues: Ribosome-recycling factor (185 aa).

The protein belongs to the RRF family.

The protein localises to the cytoplasm. In terms of biological role, responsible for the release of ribosomes from messenger RNA at the termination of protein biosynthesis. May increase the efficiency of translation by recycling ribosomes from one round of translation to another. This Helicobacter pylori (strain Shi470) protein is Ribosome-recycling factor.